The primary structure comprises 109 residues: Large ribosomal subunit protein uL22 (109 aa).

The protein belongs to the universal ribosomal protein uL22 family. As to quaternary structure, part of the 50S ribosomal subunit.

In terms of biological role, this protein binds specifically to 23S rRNA; its binding is stimulated by other ribosomal proteins, e.g. L4, L17, and L20. It is important during the early stages of 50S assembly. It makes multiple contacts with different domains of the 23S rRNA in the assembled 50S subunit and ribosome. The globular domain of the protein is located near the polypeptide exit tunnel on the outside of the subunit, while an extended beta-hairpin is found that lines the wall of the exit tunnel in the center of the 70S ribosome. This chain is Large ribosomal subunit protein uL22, found in Paraburkholderia phymatum (strain DSM 17167 / CIP 108236 / LMG 21445 / STM815) (Burkholderia phymatum).